The chain runs to 335 residues: MEGINLNQIGVSFKGSGSYVPNQILTNQEISKKVETSDEWIKSRTGISQRRISGLSENVSEMGYKAALGAIEMARWDIETIDLIILATSTPNDLFGSAPEIQSKLGAINAVAFDLTAACSGFLFAAITATQFLKAGSYKRAVVIGSDQLSSYVDWNDRRSCILFGDGAGAIAIEGTNELDNLLGFSMRTDGQRGSFLNLPSQNNQDLIINDINFSSGGFSSIKMNGQEVYKFAVREVPLIIDNLFKKTNFNSEKINWLLLHQANQRILDSVGERLNVSTEKILSNLSNYGNTSAATIPLMLDEAIRNKKIKENDIIATSGFGAGLSWGAALIRWG.

Residues Cys-119 and His-261 contribute to the active site. The interval 262-266 (QANQR) is ACP-binding. Asn-291 is an active-site residue.

This sequence belongs to the thiolase-like superfamily. FabH family. As to quaternary structure, homodimer.

Its subcellular location is the cytoplasm. The enzyme catalyses malonyl-[ACP] + acetyl-CoA + H(+) = 3-oxobutanoyl-[ACP] + CO2 + CoA. The protein operates within lipid metabolism; fatty acid biosynthesis. Catalyzes the condensation reaction of fatty acid synthesis by the addition to an acyl acceptor of two carbons from malonyl-ACP. Catalyzes the first condensation reaction which initiates fatty acid synthesis and may therefore play a role in governing the total rate of fatty acid production. Possesses both acetoacetyl-ACP synthase and acetyl transacylase activities. Its substrate specificity determines the biosynthesis of branched-chain and/or straight-chain of fatty acids. This is Beta-ketoacyl-[acyl-carrier-protein] synthase III from Prochlorococcus marinus subsp. pastoris (strain CCMP1986 / NIES-2087 / MED4).